The sequence spans 281 residues: 3-mercaptopyruvate sulfurtransferase (281 aa).

2 consecutive Rhodanese domains span residues 17–135 and 165–278; these read DDPE…LLEE and HENT…LPVE. Arg-179 contacts substrate. Cys-238 acts as the Cysteine persulfide intermediate in catalysis. The interval 238–244 is substrate specificity; sequence CGSGVTA.

Its subcellular location is the cytoplasm. It carries out the reaction 2-oxo-3-sulfanylpropanoate + [thioredoxin]-dithiol = [thioredoxin]-disulfide + hydrogen sulfide + pyruvate + H(+). Catalyzes the transfer of sulfur from 3-mercaptopyruvate to a thiol-containing acceptor to form an intramolecular disulfide releasing hydrogen sulfide and pyruvate. In Escherichia coli O157:H7, this protein is 3-mercaptopyruvate sulfurtransferase (sseA).